The primary structure comprises 380 residues: Flap endonuclease 1 (380 aa).

Residues 1–104 are N-domain; that stretch reads MGIKGLSQLI…GELTKRAEKR (104 aa). Residue Asp34 coordinates Mg(2+). DNA-binding residues include Arg47 and Arg70. The Mg(2+) site is built by Asp86, Glu158, Glu160, Asp179, and Asp181. Positions 122 to 253 are I-domain; that stretch reads DIDKFNRRLV…KKAVELINKH (132 aa). Glu158 is a binding site for DNA. DNA contacts are provided by Gly231 and Asp233. Asp233 is a binding site for Mg(2+). Residues 336 to 344 form an interaction with PCNA region; sequence TQGRLDSFF. The disordered stretch occupies residues 342 to 380; it reads SFFKVLPSTPNPKRKIEDKKTPASKKAKTTGGKPGRKPK. Residues 363 to 380 show a composition bias toward basic residues; sequence PASKKAKTTGGKPGRKPK.

This sequence belongs to the XPG/RAD2 endonuclease family. FEN1 subfamily. In terms of assembly, interacts with PCNA. Three molecules of FEN1 bind to one PCNA trimer with each molecule binding to one PCNA monomer. PCNA stimulates the nuclease activity without altering cleavage specificity. It depends on Mg(2+) as a cofactor. Phosphorylated. Phosphorylation upon DNA damage induces relocalization to the nuclear plasma.

Its subcellular location is the nucleus. It is found in the nucleolus. The protein localises to the nucleoplasm. The protein resides in the mitochondrion. In terms of biological role, structure-specific nuclease with 5'-flap endonuclease and 5'-3' exonuclease activities involved in DNA replication and repair. During DNA replication, cleaves the 5'-overhanging flap structure that is generated by displacement synthesis when DNA polymerase encounters the 5'-end of a downstream Okazaki fragment. It enters the flap from the 5'-end and then tracks to cleave the flap base, leaving a nick for ligation. Also involved in the long patch base excision repair (LP-BER) pathway, by cleaving within the apurinic/apyrimidinic (AP) site-terminated flap. Acts as a genome stabilization factor that prevents flaps from equilibrating into structures that lead to duplications and deletions. Also possesses 5'-3' exonuclease activity on nicked or gapped double-stranded DNA, and exhibits RNase H activity. Also involved in replication and repair of rDNA and in repairing mitochondrial DNA. This Aedes aegypti (Yellowfever mosquito) protein is Flap endonuclease 1.